Here is a 286-residue protein sequence, read N- to C-terminus: Small ribosomal subunit protein uS3 (286 aa).

In terms of domain architecture, KH type-2 spans Val-39 to Arg-107. The disordered stretch occupies residues Gln-213 to Ser-286. The span at Gly-241–Asn-262 shows a compositional bias: basic and acidic residues.

Belongs to the universal ribosomal protein uS3 family. Part of the 30S ribosomal subunit. Forms a tight complex with proteins S10 and S14.

Functionally, binds the lower part of the 30S subunit head. Binds mRNA in the 70S ribosome, positioning it for translation. The polypeptide is Small ribosomal subunit protein uS3 (Nitrosospira multiformis (strain ATCC 25196 / NCIMB 11849 / C 71)).